The primary structure comprises 503 residues: Annexin A11 (503 aa).

Composition is skewed to pro residues over residues 1–17 (MSYPGYPPPPGGYPPAP), 80–145 (GYPP…PYPG), and 155–169 (SPVPPPGQQPMPSYP). 2 disordered regions span residues 1-35 (MSYPGYPPPPGGYPPAPGGGAWGGAGYPPPSMPPI) and 56-178 (AANM…GTVT). Annexin repeat units follow at residues 198 to 269 (FDPL…ALMK), 270 to 341 (TPIL…SLSQ), 353 to 425 (SLVQ…AVVK), and 429 to 500 (NTPA…KICG). N6-acetyllysine is present on residues K246 and K253. K477 bears the N6-acetyllysine mark.

It belongs to the annexin family. In terms of assembly, interacts with PDCD6 in a calcium-dependent manner. Interacts with KIF23 during cytokinesis. Interacts with S100A6.

The protein resides in the cytoplasm. It localises to the melanosome. The protein localises to the nucleus envelope. It is found in the nucleus. Its subcellular location is the nucleoplasm. The protein resides in the cytoskeleton. It localises to the spindle. Required for midbody formation and completion of the terminal phase of cytokinesis. Binds specifically to calcyclin in a calcium-dependent manner. The protein is Annexin A11 (ANXA11) of Oryctolagus cuniculus (Rabbit).